The chain runs to 1297 residues: Phosphoribosylformylglycinamidine synthase (1297 aa).

Residues 307-318 (GASTGSGGEIRD) and alanine 678 each bind ATP. Residues glutamate 718, asparagine 722, and aspartate 886 each coordinate Mg(2+). The 254-residue stretch at 1044–1297 (MAILREQGVN…MFQNARKYFG (254 aa)) folds into the Glutamine amidotransferase type-1 domain. Catalysis depends on cysteine 1137, which acts as the Nucleophile. Residues histidine 1262 and glutamate 1264 contribute to the active site.

It in the N-terminal section; belongs to the FGAMS family. In terms of assembly, monomer.

It is found in the cytoplasm. The catalysed reaction is N(2)-formyl-N(1)-(5-phospho-beta-D-ribosyl)glycinamide + L-glutamine + ATP + H2O = 2-formamido-N(1)-(5-O-phospho-beta-D-ribosyl)acetamidine + L-glutamate + ADP + phosphate + H(+). The protein operates within purine metabolism; IMP biosynthesis via de novo pathway; 5-amino-1-(5-phospho-D-ribosyl)imidazole from N(2)-formyl-N(1)-(5-phospho-D-ribosyl)glycinamide: step 1/2. Its function is as follows. Phosphoribosylformylglycinamidine synthase involved in the purines biosynthetic pathway. Catalyzes the ATP-dependent conversion of formylglycinamide ribonucleotide (FGAR) and glutamine to yield formylglycinamidine ribonucleotide (FGAM) and glutamate. The protein is Phosphoribosylformylglycinamidine synthase of Vibrio cholerae serotype O1 (strain ATCC 39315 / El Tor Inaba N16961).